Here is a 269-residue protein sequence, read N- to C-terminus: Enoyl-[acyl-carrier-protein] reductase [NADH] (269 aa).

NAD(+)-binding positions include 20 to 21, 64 to 65, and 95 to 96; these read SI, DV, and IG. Tyrosine 158 is a substrate binding site. 2 residues coordinate NAD(+): lysine 165 and isoleucine 194.

The protein belongs to the short-chain dehydrogenases/reductases (SDR) family. FabI subfamily. As to quaternary structure, homodimer. Homotetramer.

It carries out the reaction a 2,3-saturated acyl-[ACP] + NAD(+) = a (2E)-enoyl-[ACP] + NADH + H(+). It catalyses the reaction a 2,3-saturated acyl-CoA + NAD(+) = a (2E)-enoyl-CoA + NADH + H(+). The protein operates within lipid metabolism; mycolic acid biosynthesis. Its function is as follows. Enoyl-ACP reductase of the type II fatty acid syntase (FAS-II) system, which is involved in the biosynthesis of mycolic acids, a major component of mycobacterial cell walls. Catalyzes the NADH-dependent reduction of the double bond of 2-trans-enoyl-[acyl-carrier protein], an essential step in the fatty acid elongation cycle of the FAS-II pathway. Shows preference for long-chain fatty acyl thioester substrates, and can also use 2-trans-enoyl-CoAs as alternative substrates. The mycobacterial FAS-II system utilizes the products of the FAS-I system as primers to extend fatty acyl chain lengths up to C56, forming the meromycolate chain that serves as the precursor for final mycolic acids. Is the primary target of the first-line antitubercular drug isoniazid (INH) and of the second-line drug ethionamide (ETH). Overexpressed inhA confers INH and ETH resistance to M.bovis. The mechanism of isoniazid action against InhA is covalent attachment of the activated form of the drug to the nicotinamide ring of NAD and binding of the INH-NAD adduct to the active site of InhA. Similarly, the ETH-NAD adduct binds InhA. In Mycobacterium bovis (strain ATCC BAA-935 / AF2122/97), this protein is Enoyl-[acyl-carrier-protein] reductase [NADH].